We begin with the raw amino-acid sequence, 222 residues long: UPF0502 protein Lcho_2066 (222 aa).

The protein belongs to the UPF0502 family.

This Leptothrix cholodnii (strain ATCC 51168 / LMG 8142 / SP-6) (Leptothrix discophora (strain SP-6)) protein is UPF0502 protein Lcho_2066.